The chain runs to 297 residues: Urease accessory protein UreD (297 aa).

Positions 1-18 (MNSSAASPPAVSPHAAPS) are enriched in low complexity. 2 disordered regions span residues 1–20 (MNSS…PSRT) and 178–201 (VDQA…PRRR).

It belongs to the UreD family. In terms of assembly, ureD, UreF and UreG form a complex that acts as a GTP-hydrolysis-dependent molecular chaperone, activating the urease apoprotein by helping to assemble the nickel containing metallocenter of UreC. The UreE protein probably delivers the nickel.

Its subcellular location is the cytoplasm. Its function is as follows. Required for maturation of urease via the functional incorporation of the urease nickel metallocenter. This Parafrankia sp. (strain EAN1pec) protein is Urease accessory protein UreD.